The sequence spans 505 residues: UDP-N-acetylmuramyl-tripeptide synthetase (505 aa).

S35 contributes to the UDP-N-acetyl-alpha-D-muramoyl-L-alanyl-D-glutamate binding site. 118 to 124 serves as a coordination point for ATP; it reads GTDGKSS. UDP-N-acetyl-alpha-D-muramoyl-L-alanyl-D-glutamate is bound by residues 163-164, T190, and R200; that span reads ST. Position 232 is an N6-carboxylysine (K232).

It belongs to the MurCDEF family. MurE subfamily. In terms of processing, carboxylation is probably crucial for Mg(2+) binding and, consequently, for the gamma-phosphate positioning of ATP.

It localises to the cytoplasm. Its pathway is cell wall biogenesis; peptidoglycan biosynthesis. Catalyzes the addition of an amino acid to the nucleotide precursor UDP-N-acetylmuramoyl-L-alanyl-D-glutamate (UMAG) in the biosynthesis of bacterial cell-wall peptidoglycan. This chain is UDP-N-acetylmuramyl-tripeptide synthetase, found in Borreliella afzelii (strain PKo) (Borrelia afzelii).